The chain runs to 328 residues: L-lactate dehydrogenase (328 aa).

Residues Val18, Glu39, Lys46, Tyr71, and 85-86 (GA) contribute to the NAD(+) site. Residues Gln88 and Arg94 each coordinate substrate. NAD(+) is bound by residues Ser107, 124–126 (AAN), and Ser149. Substrate is bound at residue 126-129 (NPVD). Residue 154–157 (DSAR) participates in substrate binding. Beta-D-fructose 1,6-bisphosphate contacts are provided by Arg159 and His174. His181 (proton acceptor) is an active-site residue. Residue Tyr226 is modified to Phosphotyrosine. Thr235 contributes to the substrate binding site.

The protein belongs to the LDH/MDH superfamily. LDH family. As to quaternary structure, homotetramer.

Its subcellular location is the cytoplasm. The enzyme catalyses (S)-lactate + NAD(+) = pyruvate + NADH + H(+). It functions in the pathway fermentation; pyruvate fermentation to lactate; (S)-lactate from pyruvate: step 1/1. Allosterically activated by fructose 1,6-bisphosphate (FBP). Its function is as follows. Catalyzes the conversion of lactate to pyruvate. In Streptococcus pneumoniae (strain 70585), this protein is L-lactate dehydrogenase.